A 731-amino-acid polypeptide reads, in one-letter code: Elongation factor 2 (731 aa).

The tr-type G domain maps to 19 to 260; that stretch reads KHIRNIGIVA…MVVHHLPNPL (242 aa). Residues 28–35, 94–98, and 148–151 contribute to the GTP site; these read AHIDHGKT, DTPGH, and NKVD. Residue histidine 597 is modified to Diphthamide.

Belongs to the TRAFAC class translation factor GTPase superfamily. Classic translation factor GTPase family. EF-G/EF-2 subfamily.

The protein localises to the cytoplasm. Functionally, catalyzes the GTP-dependent ribosomal translocation step during translation elongation. During this step, the ribosome changes from the pre-translocational (PRE) to the post-translocational (POST) state as the newly formed A-site-bound peptidyl-tRNA and P-site-bound deacylated tRNA move to the P and E sites, respectively. Catalyzes the coordinated movement of the two tRNA molecules, the mRNA and conformational changes in the ribosome. The protein is Elongation factor 2 of Methanoregula boonei (strain DSM 21154 / JCM 14090 / 6A8).